A 280-amino-acid polypeptide reads, in one-letter code: Tumor necrosis factor ligand superfamily member 6 (280 aa).

The Cytoplasmic segment spans residues 1 to 80; that stretch reads MQQPLNYPYP…KTRRDHNTGL (80 aa). The segment at 20-71 is disordered; sequence SSPWGPPGSVLPCPSSVPGRPGQRRPPPPPPPTLPPPPPPPPLPPLPLPPLK. The segment covering 43-69 has biased composition (pro residues); sequence RRPPPPPPPTLPPPPPPPPLPPLPLPP. The chain crosses the membrane as a helical; Signal-anchor for type II membrane protein span at residues 81–101; that stretch reads CLLVMFFMVLVALVGLGLGMF. Topologically, residues 102-280 are extracellular; it reads QLFHLQKELA…SKTFFGLYKL (179 aa). The THD domain maps to 144 to 280; the sequence is KVAHLTGKPN…SKTFFGLYKL (137 aa). A glycan (N-linked (GlcNAc...) asparagine) is linked at N183. C201 and C232 are oxidised to a cystine. N-linked (GlcNAc...) asparagine glycosylation is found at N249 and N259.

Belongs to the tumor necrosis factor family. In terms of assembly, homotrimer. Interacts with ARHGAP9, BAIAP2L1, BTK, CACNB3, CACNB4, CRK, DLG2, DNMBP, DOCK4, EPS8L3, FGR, FYB1, FYN, HCK, ITK, ITSN2, KALRN, LYN, MACC1, MIA, MPP4, MYO15A, NCF1, NCK1, NCK2, NCKIPSD, OSTF1, PIK3R1, PSTPIP1, RIMBP3C, SAMSN1, SH3GL3, SH3PXD2B, SH3PXD2A, SH3RF2, SKAP2, SNX33, SNX9, SORBS3, SPTA1, SRC, SRGAP1, SRGAP2, SRGAP3, TEC, TJP3 and YES1. Post-translationally, the soluble form derives from the membrane form by proteolytic processing. The membrane-bound form undergoes two successive intramembrane proteolytic cleavages. The first one is processed by ADAM10 producing an N-terminal fragment, which lacks the receptor-binding extracellular domain. This ADAM10-processed FasL (FasL APL) remnant form is still membrane anchored and further processed by SPPL2A that liberates the FasL intracellular domain (FasL ICD). FasL shedding by ADAM10 is a prerequisite for subsequent intramembrane cleavage by SPPL2A in T-cells. Phosphorylated by FGR on tyrosine residues; this is required for ubiquitination and subsequent internalization. In terms of processing, N-glycosylated. Glycosylation enhances apoptotic activity. Post-translationally, monoubiquitinated.

It is found in the cell membrane. Its subcellular location is the cytoplasmic vesicle lumen. The protein resides in the lysosome lumen. It localises to the secreted. The protein localises to the nucleus. In terms of biological role, cytokine that binds to TNFRSF6/FAS, a receptor that transduces the apoptotic signal into cells. Involved in cytotoxic T-cell-mediated apoptosis, natural killer cell-mediated apoptosis and in T-cell development. Initiates fratricidal/suicidal activation-induced cell death (AICD) in antigen-activated T-cells contributing to the termination of immune responses. TNFRSF6/FAS-mediated apoptosis has also a role in the induction of peripheral tolerance. Binds to TNFRSF6B/DcR3, a decoy receptor that blocks apoptosis. Its function is as follows. Induces FAS-mediated activation of NF-kappa-B, initiating non-apoptotic signaling pathways. Can induce apoptosis but does not appear to be essential for this process. Cytoplasmic form induces gene transcription inhibition. The chain is Tumor necrosis factor ligand superfamily member 6 (FASLG) from Felis catus (Cat).